The chain runs to 1099 residues: SLIT-ROBO Rho GTPase-activating protein 3 (1099 aa).

The 296-residue stretch at 19–314 folds into the F-BAR domain; sequence AQIKEIRTQL…AVDNLDSRSD (296 aa). The segment at 205 to 225 is disordered; the sequence is HEDRPQRRSSVKKIEKMKEKR. Residues 352 to 392 are a coiled coil; it reads QTELLMRYHQLQSRLATLKIENEEVRKTLDATMQTLQDMLT. The tract at residues 471 to 493 is disordered; sequence ERAECGTTRPPCLPPKPQKMRRP. The Rho-GAP domain occupies 506-694; it reads GSMEAFIKDS…TIIIHHEAIF (189 aa). An SH3 domain is found at 744–803; sequence VEQIEAIAKFDYMGRSPRELSFKKGASLLLYHRASEDWWEGRHNGVDGLIPHQYIVVQDM. Over residues 809–820 the composition is skewed to polar residues; the sequence is DSLSQKADSEAS. The tract at residues 809 to 847 is disordered; the sequence is DSLSQKADSEASSGPLLDDKASSKNDLQSPTEHISDYGF. Phosphoserine occurs at positions 817, 820, 821, 837, and 858. Disordered stretches follow at residues 861-911 and 926-950; these read AAIP…SPEK and PDKK…SSLG. Residues 926–936 are compositionally biased toward basic and acidic residues; the sequence is PDKKALSEGHS. The span at 937-947 shows a compositional bias: polar residues; sequence MRSTCGSTRHS. Residues 952–987 are a coiled coil; sequence HKSLEAEALAEDIEKTMSTALHELRELERQNTVKQA. A Phosphoserine modification is found at serine 954. The segment at 995-1099 is disordered; it reads LEPLKNPPGP…NSSADKSGTM (105 aa). Low complexity-rich tracts occupy residues 1026 to 1038 and 1060 to 1074; these read RRSS…MMTT and VRPV…SSSS. Residues 1089-1099 show a composition bias toward polar residues; the sequence is PNSSADKSGTM.

Homodimer. Forms a heterooligomer with SRGAP1 and SRGAP2 through its F-BAR domain. Interacts with WASF1. Probably interacts with ROBO1. Interacts with FASLG. In terms of tissue distribution, highly expressed in adult and fetal brain. Expressed at low levels in kidney. Isoform 3 is expressed in the kidney but is absent in the brain.

Functionally, GTPase-activating protein for RAC1 and perhaps Cdc42, but not for RhoA small GTPase. May attenuate RAC1 signaling in neurons. This chain is SLIT-ROBO Rho GTPase-activating protein 3 (SRGAP3), found in Homo sapiens (Human).